The following is a 162-amino-acid chain: Peptidyl-prolyl cis-trans isomerase-like 1 (162 aa).

The region spanning 1-155 (MTTNIVLETT…EEVKIVKARV (155 aa)) is the PPIase cyclophilin-type domain.

Belongs to the cyclophilin-type PPIase family. PPIL1 subfamily.

The enzyme catalyses [protein]-peptidylproline (omega=180) = [protein]-peptidylproline (omega=0). In terms of biological role, PPIases accelerate the folding of proteins. It catalyzes the cis-trans isomerization of proline imidic peptide bonds in oligopeptides. This Gibberella zeae (strain ATCC MYA-4620 / CBS 123657 / FGSC 9075 / NRRL 31084 / PH-1) (Wheat head blight fungus) protein is Peptidyl-prolyl cis-trans isomerase-like 1 (CYP1).